The sequence spans 420 residues: Sodium-dependent phosphate transport protein 4 (420 aa).

The disordered stretch occupies residues 1 to 21 (MATKTELSPTARESKNAQDMQ). N-linked (GlcNAc...) asparagine glycosylation is found at asparagine 49, asparagine 60, asparagine 68, and asparagine 77. 8 helical membrane passes run 126–146 (SIAL…GGFI), 154–174 (FVFY…FVVI), 218–238 (IWSI…MVVY), 256–276 (LLSA…GYLA), 292–314 (IATI…LNSG), 319–341 (TALL…INVL), 357–377 (GFSS…LSQD), and 385–405 (VFFL…IFGE).

Belongs to the major facilitator superfamily. Sodium/anion cotransporter family. In terms of tissue distribution, expressed in the liver and kidney. It is detected in proximal tubules in renal cortex as well as some tubules and glomeruli, with highest expression at the apical side of proximal tubules (at protein level).

Its subcellular location is the endoplasmic reticulum membrane. The protein localises to the cell membrane. The enzyme catalyses urate(in) + Na(+)(out) = urate(out) + Na(+)(in). Functionally, transports organic anions in a voltage-driven, multispecific, manner, on the apical side of renal proximal tubule. In particular, participates in the secretion of urate from the cell into the lumen. Urate is the end product of purine metabolism. May have roles in the metabolism and secretion of estrone sulfate, estradiol-17-beta-glucuronide, ochratoxin A, as wells as drugs such as bumetanide. The protein is Sodium-dependent phosphate transport protein 4 (SLC17A3) of Homo sapiens (Human).